We begin with the raw amino-acid sequence, 181 residues long: Oligoribonuclease (181 aa).

Positions 8–171 constitute an Exonuclease domain; it reads LIWVDLEMTG…DDIRESIAEL (164 aa). Tyr129 is a catalytic residue.

Belongs to the oligoribonuclease family.

It localises to the cytoplasm. In terms of biological role, 3'-to-5' exoribonuclease specific for small oligoribonucleotides. This is Oligoribonuclease from Vibrio parahaemolyticus serotype O3:K6 (strain RIMD 2210633).